A 125-amino-acid chain; its full sequence is Phosphoribosyl-AMP cyclohydrolase (125 aa).

Aspartate 91 contributes to the Mg(2+) binding site. Cysteine 92 contributes to the Zn(2+) binding site. Residues aspartate 93 and aspartate 95 each coordinate Mg(2+). 2 residues coordinate Zn(2+): cysteine 108 and cysteine 115.

The protein belongs to the PRA-CH family. As to quaternary structure, homodimer. The cofactor is Mg(2+). Zn(2+) serves as cofactor.

The protein resides in the cytoplasm. The enzyme catalyses 1-(5-phospho-beta-D-ribosyl)-5'-AMP + H2O = 1-(5-phospho-beta-D-ribosyl)-5-[(5-phospho-beta-D-ribosylamino)methylideneamino]imidazole-4-carboxamide. It functions in the pathway amino-acid biosynthesis; L-histidine biosynthesis; L-histidine from 5-phospho-alpha-D-ribose 1-diphosphate: step 3/9. In terms of biological role, catalyzes the hydrolysis of the adenine ring of phosphoribosyl-AMP. This is Phosphoribosyl-AMP cyclohydrolase from Streptomyces griseus subsp. griseus (strain JCM 4626 / CBS 651.72 / NBRC 13350 / KCC S-0626 / ISP 5235).